Here is a 367-residue protein sequence, read N- to C-terminus: MKTKVGVLYGGKSPEHQVSLSTAMAVMNAIDPHKFDVIPIYITPEGQWIKGEQLTGPIEEIKQLQFTSAATALIPVSLNQVPAADSAAGGNEETIDVIFPLLHGPNGEDGTVQGLLEILNIPYVGNGVLASAVGMDKVMMKNLFAQAGLRQAKYIAVTKYDWQKRGETVYDRIERELGYPCFVKPANAGSSVGISKCKQRGDLKAAFIEAFQYDRKIIIEEAIVGREIEIGVIGNDEPICSVVGEIVPKKEFYDYEAKYEDGQTELIIPADVTKEQYETIKQMAITAFQVLDLSGLARVDFFLAEDGAVYINEVNTMPGFTPYSMFPLLWQHSGVPYPELIERLIALALERHQEKQTITYTFKKEKR.

Residues 141–346 form the ATP-grasp domain; that stretch reads KNLFAQAGLR…YPELIERLIA (206 aa). 174 to 229 contributes to the ATP binding site; the sequence is ERELGYPCFVKPANAGSSVGISKCKQRGDLKAAFIEAFQYDRKIIIEEAIVGREIE. Residues Asp-300, Glu-313, and Asn-315 each coordinate Mg(2+).

Belongs to the D-alanine--D-alanine ligase family. Requires Mg(2+) as cofactor. Mn(2+) serves as cofactor.

The protein localises to the cytoplasm. It catalyses the reaction 2 D-alanine + ATP = D-alanyl-D-alanine + ADP + phosphate + H(+). Its pathway is cell wall biogenesis; peptidoglycan biosynthesis. Cell wall formation. The protein is D-alanine--D-alanine ligase of Geobacillus kaustophilus (strain HTA426).